Consider the following 703-residue polypeptide: Ubiquitin-like modifier-activating enzyme ATG7 (703 aa).

The residue at position 2 (Ala-2) is an N-acetylalanine. The FAP motif motif lies at 15–17 (FAP). Lys-45 participates in a covalent cross-link: Glycyl lysine isopeptide (Lys-Gly) (interchain with G-Cter in ubiquitin). Cys-572 functions as the Glycyl thioester intermediate in the catalytic mechanism. Ser-698 bears the Phosphoserine mark.

It belongs to the ATG7 family. As to quaternary structure, homodimer. Interacts with ATG3; this interaction is essential for the transfer of ATG8-like proteins's thioester from ATG7 to ATG3 and plays a role in the conjugation of ATG12 to ATG5. Interacts with ATG12. Forms intermediate conjugates with GABARAPL1. Forms intermediate conjugates with ATG8-like proteins such as GABARAP, GABARAPL2 or MAP1LC3A. Interacts with EP300 acetyltransferase. Interacts with FOXO1. In terms of processing, acetylated by EP300. Polyubiquitinated on Lys-45 via 'Lys-63'-linked ubiquitin by TRIM32; this modification positiely regulates ATG8 and ATG12 activating enzyme activity leading to initiation of autophagy under metabolic stress. In terms of tissue distribution, widely expressed, especially in kidney, liver, lymph nodes and bone marrow.

The protein localises to the cytoplasm. The protein resides in the preautophagosomal structure. In terms of biological role, E1-like activating enzyme involved in the 2 ubiquitin-like systems required for cytoplasm to vacuole transport (Cvt) and autophagy. Activates ATG12 for its conjugation with ATG5 as well as the ATG8 family proteins for their conjugation with phosphatidylethanolamine. Both systems are needed for the ATG8 association to Cvt vesicles and autophagosomes membranes. Required for autophagic death induced by caspase-8 inhibition. Facilitates LC3-I lipidation with phosphatidylethanolamine to form LC3-II which is found on autophagosomal membranes. Required for mitophagy which contributes to regulate mitochondrial quantity and quality by eliminating the mitochondria to a basal level to fulfill cellular energy requirements and preventing excess ROS production. Modulates p53/TP53 activity to regulate cell cycle and survival during metabolic stress. Also plays a key role in the maintenance of axonal homeostasis, the prevention of axonal degeneration, the maintenance of hematopoietic stem cells, the formation of Paneth cell granules, as well as in adipose differentiation. Plays a role in regulating the liver clock and glucose metabolism by mediating the autophagic degradation of CRY1 (clock repressor) in a time-dependent manner. This chain is Ubiquitin-like modifier-activating enzyme ATG7, found in Homo sapiens (Human).